Here is a 249-residue protein sequence, read N- to C-terminus: Exosome complex component Rrp41 (249 aa).

Belongs to the RNase PH family. Rrp41 subfamily. Component of the archaeal exosome complex. Forms a hexameric ring-like arrangement composed of 3 Rrp41-Rrp42 heterodimers. The hexameric ring associates with a trimer of Rrp4 and/or Csl4 subunits.

It is found in the cytoplasm. Its function is as follows. Catalytic component of the exosome, which is a complex involved in RNA degradation. Has 3'-&gt;5' exoribonuclease activity. Can also synthesize heteromeric RNA-tails. The polypeptide is Exosome complex component Rrp41 (Thermococcus onnurineus (strain NA1)).